The chain runs to 365 residues: Aspartate-semialdehyde dehydrogenase (365 aa).

NADP(+) contacts are provided by Thr13, Gly14, Ser15, Val16, Ser38, Ser41, Leu85, and Asp86. A Phosphothreonine modification is found at Thr13. Cys156 functions as the Acyl-thioester intermediate in the catalytic mechanism. Gly188 lines the NADP(+) pocket. The Proton acceptor role is filled by His256. 2 positions are modified to phosphoserine: Ser318 and Ser323. Position 343 (Asn343) interacts with NADP(+).

This sequence belongs to the aspartate-semialdehyde dehydrogenase family. In terms of assembly, homotetramer.

Its subcellular location is the cytoplasm. It localises to the cytosol. It is found in the nucleus. The enzyme catalyses L-aspartate 4-semialdehyde + phosphate + NADP(+) = 4-phospho-L-aspartate + NADPH + H(+). It participates in amino-acid biosynthesis; L-methionine biosynthesis via de novo pathway; L-homoserine from L-aspartate: step 2/3. It functions in the pathway amino-acid biosynthesis; L-threonine biosynthesis; L-threonine from L-aspartate: step 2/5. Catalyzes the NADPH-dependent formation of L-aspartate 4-semialdehyde (L-ASA) by the reductive dephosphorylation of 4-phospho-L-aspartate. Mediates the second step in the biosynthesis of amino acids that derive from aspartate (the aspartate family of amino acids), including methioinine and threonine, the latter of which is a precursor to isoleucine. This Saccharomyces cerevisiae (strain ATCC 204508 / S288c) (Baker's yeast) protein is Aspartate-semialdehyde dehydrogenase (HOM2).